The sequence spans 415 residues: Carboxypeptidase B (415 aa).

An N-terminal signal peptide occupies residues 1–13 (MLLLLALVSVALA). A propeptide spans 14–108 (HASEEHFDGN…LESQFDSHTR (95 aa)) (activation peptide). In terms of domain architecture, Peptidase M14 spans 116 to 410 (KYNKWETIEA…LAVKYIANYV (295 aa)). A disulfide bridge connects residues Cys171 and Cys184. Residues His174 and Glu177 each contribute to the Zn(2+) site. Substrate contacts are provided by residues 174–177 (HARE), Arg232, and 249–250 (NR). Intrachain disulfides connect Cys243–Cys266 and Cys257–Cys271. A Zn(2+)-binding site is contributed by His302. Substrate-binding positions include 303-304 (SY) and Tyr354. The active-site Proton donor/acceptor is the Glu376.

This sequence belongs to the peptidase M14 family. The cofactor is Zn(2+).

It localises to the secreted. It is found in the zymogen granule lumen. The enzyme catalyses Preferential release of a C-terminal lysine or arginine amino acid.. The sequence is that of Carboxypeptidase B (Cpb1) from Rattus norvegicus (Rat).